Here is a 177-residue protein sequence, read N- to C-terminus: Adenylate kinase (177 aa).

13 to 18 (GCGKGT) is an ATP binding site. The interval 33-62 (SSGDIIREEMKKSSKEATVIREMVNSGRLA) is NMP. AMP contacts are provided by residues serine 34, arginine 39, 60 to 62 (RLA), 85 to 88 (GYPR), and glutamine 92. Positions 119–127 (GRNEGRDDD) are LID. ATP is bound at residue arginine 120. Residues arginine 124 and arginine 135 each coordinate AMP.

The protein belongs to the adenylate kinase family. Monomer.

Its subcellular location is the cytoplasm. The catalysed reaction is AMP + ATP = 2 ADP. Its function is as follows. Catalyzes the reversible transfer of the terminal phosphate group between ATP and AMP. Plays an important role in cellular energy homeostasis and in adenine nucleotide metabolism. This is Adenylate kinase from Encephalitozoon cuniculi (strain GB-M1) (Microsporidian parasite).